The sequence spans 212 residues: MQSEESIMTDLATSEIPETDPFALFAEWMEEARASELNDPNAMALATATPDGAPSVRMVLLKDHGPQGFTFYTNAESRKGEEIRANAQTALLFHWKSLRRQIRVEGPVREVAPEVADAYFHSRARESQLGAVASDQSRPLEDRRVFVDRFRAAQERFDEGEVERPAYWTGFTVTPQRIEFWCDRPNRLHDRRLFTLSGAGDALSWTSTLLYP.

Residues Arg-57–Lys-62, Tyr-72–Thr-73, Arg-78, Lys-79, and Gln-101 each bind FMN. Lys-62 is a substrate binding site. Substrate contacts are provided by Tyr-119, Arg-123, and Ser-127. FMN-binding positions include Gln-136–Ser-137 and Trp-181. Residue Arg-187–His-189 coordinates substrate. An FMN-binding site is contributed by Arg-191.

This sequence belongs to the pyridoxamine 5'-phosphate oxidase family. Homodimer. It depends on FMN as a cofactor.

The enzyme catalyses pyridoxamine 5'-phosphate + O2 + H2O = pyridoxal 5'-phosphate + H2O2 + NH4(+). It carries out the reaction pyridoxine 5'-phosphate + O2 = pyridoxal 5'-phosphate + H2O2. Its pathway is cofactor metabolism; pyridoxal 5'-phosphate salvage; pyridoxal 5'-phosphate from pyridoxamine 5'-phosphate: step 1/1. The protein operates within cofactor metabolism; pyridoxal 5'-phosphate salvage; pyridoxal 5'-phosphate from pyridoxine 5'-phosphate: step 1/1. Its function is as follows. Catalyzes the oxidation of either pyridoxine 5'-phosphate (PNP) or pyridoxamine 5'-phosphate (PMP) into pyridoxal 5'-phosphate (PLP). The sequence is that of Pyridoxine/pyridoxamine 5'-phosphate oxidase from Erythrobacter litoralis (strain HTCC2594).